Here is a 102-residue protein sequence, read N- to C-terminus: Citrate lyase acyl carrier protein (102 aa).

O-(phosphoribosyl dephospho-coenzyme A)serine is present on serine 14.

This sequence belongs to the CitD family. In terms of assembly, oligomer with a subunit composition of (alpha,beta,gamma)6.

The protein localises to the cytoplasm. Functionally, covalent carrier of the coenzyme of citrate lyase. The protein is Citrate lyase acyl carrier protein of Streptococcus pyogenes serotype M4 (strain MGAS10750).